Here is a 415-residue protein sequence, read N- to C-terminus: E3 ubiquitin-protein ligase RNF135 (415 aa).

Residues Cys21–Arg67 form an RING-type zinc finger. A coiled-coil region spans residues Thr181–Ser206. In terms of domain architecture, B30.2/SPRY spans Pro228–Leu415.

As to quaternary structure, homodimer. Interacts (homodimer) with RIGI (double-stranded RNA-bound oligomeric form); involved in both RIGI ubiquitination, oligomerization into filaments associated with viral RNAs and the bridging of these filaments. Interacts with UBE2D3 and UBE2N; E2 ubiquitin ligases involved in RNF135-mediated ubiquitination of RIGI and activation of the RIG-I signaling pathway. Interacts with PCBP2.

It is found in the cytoplasm. Its subcellular location is the stress granule. The enzyme catalyses S-ubiquitinyl-[E2 ubiquitin-conjugating enzyme]-L-cysteine + [acceptor protein]-L-lysine = [E2 ubiquitin-conjugating enzyme]-L-cysteine + N(6)-ubiquitinyl-[acceptor protein]-L-lysine.. Its pathway is protein modification; protein ubiquitination. In terms of biological role, E2-dependent E3 ubiquitin-protein ligase that functions as a RIGI coreceptor in the sensing of viral RNAs in cell cytoplasm and the activation of the antiviral innate immune response. Together with the UBE2D3, UBE2N and UB2V1 E2 ligases, catalyzes the 'Lys-63'-linked polyubiquitination of RIGI oligomerized on viral RNAs, an essential step in the activation of the RIG-I signaling pathway. Through a ubiquitin-independent parallel mechanism, which consists in bridging RIGI filaments forming on longer viral RNAs, further activates the RIG-I signaling pathway. This second mechanism that synergizes with the ubiquitin-dependent one would thereby allow an RNA length-dependent regulation of the RIG-I signaling pathway. Associated with the E2 ligase UBE2N, also constitutively synthesizes unanchored 'Lys-63'-linked polyubiquitin chains that may also activate the RIG-I signaling pathway. This is E3 ubiquitin-protein ligase RNF135 from Rattus norvegicus (Rat).